We begin with the raw amino-acid sequence, 356 residues long: MSRANPPSNSSGSRKISFNVSEQYDIQDVVGEGAYGVVCSAIHKPSGQKVAIKKITPFDHSMFCLRTLREMKLLRYFNHENIISILDIQKPRSYETFNEVYLIQELMETDMHRVIRTQDLSDDHCQYFIYQTLRALKAMHSANVLHRDLKPSNLLLNANCDLKVCDFGLARSAASQEDNSGFMTEYVATRWYRAPEIMLTFKEYTKAIDVWSVGCILAEMLSGKPLFPGKDYHHQLTLILDVLGTPTMEDYYGIKSRRAREYIRSLPFKKKVPFRTLFPKTSDLALDLLEKLLAFNPVKRITVEEALKHPYLEPYHDPDDEPTAPPIPEEFFDFDKHKDNLSKEQLKQFIYQEIMR.

The 289-residue stretch at 24-312 (YDIQDVVGEG…VEEALKHPYL (289 aa)) folds into the Protein kinase domain. Residues 30-38 (VGEGAYGVV) and Lys-53 each bind ATP.

It belongs to the protein kinase superfamily. CMGC Ser/Thr protein kinase family. MAP kinase subfamily. Requires Mg(2+) as cofactor. In terms of processing, phosphorylated by MST7.

It carries out the reaction L-seryl-[protein] + ATP = O-phospho-L-seryl-[protein] + ADP + H(+). It catalyses the reaction L-threonyl-[protein] + ATP = O-phospho-L-threonyl-[protein] + ADP + H(+). In terms of biological role, mitogen-activated protein kinase; part of the MST11-MST7-PMK1 MAP kinase (MAPK) cascade that is essential for appressorium formation, penetration and invasive growth. Central regulator of appressorium development that acts downstream of the cAMP signal. The MST11-MST7-PMK1 MAP kinase cascade transduces signals from the cell surface sensors MDB2 and SHO1 that recognize various surface signals such as surface hydrophobicity, cutin monomers, and rice leaf waxes. Regulates expression of secreted fungal effector proteins implicated of host immune defenses, preventing reactive oxygen species generation and excessive callose deposition at plasmodesmata. Furthermore, controls the hyphal constriction required for fungal growth from one rice cell to the neighboring cell, enabling host tissue colonization and blast disease. Targets downstream of the PMK1-MAPK pathway include transcription factor MST12 and pathogenicity-related genes GAS1 and GAS2, both of which are expressed during appressorium formation, even if regulation of MST12 is not associated with expression of GAS1 or GAS2. This Pyricularia oryzae (strain 70-15 / ATCC MYA-4617 / FGSC 8958) (Rice blast fungus) protein is Mitogen-activated protein kinase PMK11.